Consider the following 129-residue polypeptide: Small ribosomal subunit protein uS11 (129 aa).

Belongs to the universal ribosomal protein uS11 family. As to quaternary structure, part of the 30S ribosomal subunit. Interacts with proteins S7 and S18. Binds to IF-3.

In terms of biological role, located on the platform of the 30S subunit, it bridges several disparate RNA helices of the 16S rRNA. Forms part of the Shine-Dalgarno cleft in the 70S ribosome. The polypeptide is Small ribosomal subunit protein uS11 (Staphylococcus carnosus (strain TM300)).